The primary structure comprises 1000 residues: Lysine-specific histone demethylase 1 (1000 aa).

The tract at residues 104–123 is disordered; it reads RRPAGRRGRPALNTSNSLER. A coiled-coil region spans residues 107 to 137; the sequence is AGRRGRPALNTSNSLERNGTRYVSAEAPISV. Residues 153-249 enclose the SWIRM domain; sequence CYESAIASNL…YGCIYIISSL (97 aa). Residues 260-302, E301, and 328-329 contribute to the FAD site; these read VAII…IYEA and LA. Positions 279-950 are demethylase activity; it reads LFAQYEQDFL…RCESQPIPED (672 aa). Residues 434–529 adopt a coiled-coil conformation; the sequence is IGWYISIEAF…ADMLNSLAST (96 aa). The disordered stretch occupies residues 780 to 800; it reads TYGTKRNAQQALGKEGERENK. Residues 841–921 constitute a DNA-binding region (HMG box); that stretch reads SRPSANPYLL…NYSTRLEEYQ (81 aa). 908 to 909 contributes to the FAD binding site; the sequence is AR. Over residues 959 to 972 the composition is skewed to basic and acidic residues; the sequence is EQEDEHLHPEKEGM. The disordered stretch occupies residues 959–1000; sequence EQEDEHLHPEKEGMSVENSDDDYHDDLDYEDSISEVFPDNFS. Acidic residues predominate over residues 976–991; that stretch reads NSDDDYHDDLDYEDSI.

Belongs to the flavin monoamine oxidase family. As to quaternary structure, component of the SWM histone demethylase complex composed of at least lsd1, lsd2, phf1 and phf2. Interacts directly with lsd2. FAD is required as a cofactor.

The protein localises to the nucleus. Its function is as follows. Catalytic component of the SWM histone demethylase complex that specifically demethylates H3K9me2, a specific tag for epigenetic transcriptional activation, thereby acting as a corepressor. Acts by oxidizing the substrate by FAD to generate the corresponding imine that is subsequently hydrolyzed. Has a role in regulating heterochromatin propagation and euchromatic transcription. Also has a gene activating role. The sequence is that of Lysine-specific histone demethylase 1 (lsd1) from Schizosaccharomyces pombe (strain 972 / ATCC 24843) (Fission yeast).